The following is a 228-amino-acid chain: PKHD-type hydroxylase xcc-b100_1388 (228 aa).

The 103-residue stretch at 78 to 180 (RIYPPLFNRY…RVASFFWIQS (103 aa)) folds into the Fe2OG dioxygenase domain. Fe cation-binding residues include histidine 96, aspartate 98, and histidine 161. Position 171 (arginine 171) interacts with 2-oxoglutarate.

It depends on Fe(2+) as a cofactor. L-ascorbate is required as a cofactor.

In Xanthomonas campestris pv. campestris (strain B100), this protein is PKHD-type hydroxylase xcc-b100_1388.